The primary structure comprises 433 residues: Glutamate-1-semialdehyde 2,1-aminomutase (433 aa).

Lysine 271 carries the N6-(pyridoxal phosphate)lysine modification.

The protein belongs to the class-III pyridoxal-phosphate-dependent aminotransferase family. HemL subfamily. Homodimer. The cofactor is pyridoxal 5'-phosphate.

The protein localises to the cytoplasm. It catalyses the reaction (S)-4-amino-5-oxopentanoate = 5-aminolevulinate. It participates in porphyrin-containing compound metabolism; protoporphyrin-IX biosynthesis; 5-aminolevulinate from L-glutamyl-tRNA(Glu): step 2/2. The protein operates within porphyrin-containing compound metabolism; chlorophyll biosynthesis. The protein is Glutamate-1-semialdehyde 2,1-aminomutase of Prochlorococcus marinus (strain AS9601).